The following is a 382-amino-acid chain: MKITKITTYRLPPRWMFLKIETDEGVVGWGEPVIEGRARTVEAAVHELGDYLIGQDPSRINDLWQVMYRAGFYRGGPILMSAIAGIDQALWDIKGKVLNAPVWQLMGGLVRDKIKAYSWVGGDRPADVIDGIKTLREIGFDTFKLNGCEELGLIDNSRAVDAAVNTVAQIREAFGNQIEFGLDFHGRVSAPMAKVLIKELEPYRPLFIEEPVLAEQAEYYPKLAAQTHIPLAAGERMFSRFDFKRVLEAGGISILQPDLSHAGGITECYKIAGMAEAYDVTLAPHCPLGPIALAACLHIDFVSYNAVLQEQSMGIHYNKGAELLDFVKNKEDFSMVGGFFKPLTKPGLGVEIDEAKVIEFSKNAPDWRNPLWRHEDNSVAEW.

Position 183 (Asp183) interacts with Mg(2+). His185 acts as the Proton donor in catalysis. Residues Glu209 and Glu235 each contribute to the Mg(2+) site. Residue His285 is the Proton acceptor of the active site.

Belongs to the mandelate racemase/muconate lactonizing enzyme family. GalD subfamily. Mg(2+) is required as a cofactor.

The catalysed reaction is D-galactonate = 2-dehydro-3-deoxy-D-galactonate + H2O. It functions in the pathway carbohydrate acid metabolism; D-galactonate degradation; D-glyceraldehyde 3-phosphate and pyruvate from D-galactonate: step 1/3. Functionally, catalyzes the dehydration of D-galactonate to 2-keto-3-deoxy-D-galactonate. The polypeptide is D-galactonate dehydratase (Escherichia coli (strain 55989 / EAEC)).